We begin with the raw amino-acid sequence, 346 residues long: Phosphoribosylformylglycinamidine cyclo-ligase (346 aa).

This sequence belongs to the AIR synthase family.

The protein resides in the cytoplasm. The enzyme catalyses 2-formamido-N(1)-(5-O-phospho-beta-D-ribosyl)acetamidine + ATP = 5-amino-1-(5-phospho-beta-D-ribosyl)imidazole + ADP + phosphate + H(+). It participates in purine metabolism; IMP biosynthesis via de novo pathway; 5-amino-1-(5-phospho-D-ribosyl)imidazole from N(2)-formyl-N(1)-(5-phospho-D-ribosyl)glycinamide: step 2/2. This is Phosphoribosylformylglycinamidine cyclo-ligase from Aliivibrio fischeri (strain ATCC 700601 / ES114) (Vibrio fischeri).